The chain runs to 283 residues: Putative cytochrome b-c1 complex subunit Rieske-like protein 1 (283 aa).

Residues 116–149 traverse the membrane as a helical segment; it reads TEARKGFSYLVTGVTTVGVAYAAKNAVTQFVSSM. One can recognise a Rieske domain in the interval 196 to 281; sequence EAAVELSQLR…YEFTSDDMVI (86 aa). 4 residues coordinate [2Fe-2S] cluster: C226, H228, C245, and H248. Residues C231 and C247 are joined by a disulfide bond.

The protein belongs to the Rieske iron-sulfur protein family. [2Fe-2S] cluster serves as cofactor.

Its subcellular location is the membrane. The sequence is that of Putative cytochrome b-c1 complex subunit Rieske-like protein 1 (UQCRFS1P1) from Homo sapiens (Human).